The sequence spans 36 residues: Potassium channel toxin alpha-KTx 16.1 (36 aa).

3 disulfide bridges follow: cysteine 7–cysteine 28, cysteine 13–cysteine 33, and cysteine 17–cysteine 35.

The protein belongs to the short scorpion toxin superfamily. Potassium channel inhibitor family. Alpha-KTx 16 subfamily. In terms of tissue distribution, expressed by the venom gland.

Its subcellular location is the secreted. Its function is as follows. Blocks calcium-activated potassium channels. In Hottentotta tamulus (Eastern Indian scorpion), this protein is Potassium channel toxin alpha-KTx 16.1.